Consider the following 605-residue polypeptide: Elongation factor 4 (605 aa).

Residues 4 to 186 (SSVRNFCIIA…AIVNKVPAPK (183 aa)) enclose the tr-type G domain. Residues 16 to 21 (DHGKST) and 133 to 136 (NKID) each bind GTP.

The protein belongs to the TRAFAC class translation factor GTPase superfamily. Classic translation factor GTPase family. LepA subfamily.

The protein localises to the cell membrane. The catalysed reaction is GTP + H2O = GDP + phosphate + H(+). In terms of biological role, required for accurate and efficient protein synthesis under certain stress conditions. May act as a fidelity factor of the translation reaction, by catalyzing a one-codon backward translocation of tRNAs on improperly translocated ribosomes. Back-translocation proceeds from a post-translocation (POST) complex to a pre-translocation (PRE) complex, thus giving elongation factor G a second chance to translocate the tRNAs correctly. Binds to ribosomes in a GTP-dependent manner. The sequence is that of Elongation factor 4 from Dehalococcoides mccartyi (strain ATCC BAA-2100 / JCM 16839 / KCTC 5957 / BAV1).